Reading from the N-terminus, the 776-residue chain is 3-isopropylmalate dehydratase (776 aa).

The [4Fe-4S] cluster site is built by Cys357, Cys418, and Cys421. Positions 482–493 (SAPKVEVRHDTD) are enriched in basic and acidic residues. Disordered regions lie at residues 482–518 (SAPK…SDVA) and 525–544 (DIPV…SADA). A compositionally biased stretch (polar residues) spans 527–538 (PVSNSSTQSPGS).

It belongs to the aconitase/IPM isomerase family. In terms of assembly, monomer. It depends on [4Fe-4S] cluster as a cofactor.

It carries out the reaction (2R,3S)-3-isopropylmalate = (2S)-2-isopropylmalate. It functions in the pathway amino-acid biosynthesis; L-leucine biosynthesis; L-leucine from 3-methyl-2-oxobutanoate: step 2/4. Catalyzes the isomerization between 2-isopropylmalate and 3-isopropylmalate, via the formation of 2-isopropylmaleate. The chain is 3-isopropylmalate dehydratase (LEU1) from Eremothecium gossypii (strain ATCC 10895 / CBS 109.51 / FGSC 9923 / NRRL Y-1056) (Yeast).